A 181-amino-acid chain; its full sequence is Methanesulfonate monooxygenase hydroxylase subunit beta (181 aa).

It belongs to the bacterial ring-hydroxylating dioxygenase beta subunit family. In terms of assembly, the MSA monooxygenase system consists of 4 proteins: the 2 subunits of the hydroxylase component (MsmA and MsmB), a ferredoxin (MsmC) and a ferredoxin reductase (MsmD). The hydroxylase component consists of a 3 alpha (MsmA) and 3 beta (MsmB) subunits.

It localises to the cytoplasm. The catalysed reaction is methanesulfonate + NADH + O2 = sulfite + formaldehyde + NAD(+) + H2O. MSAMO is inhibited by metal chelators (such as bathophenanthroline, bathocuprione, neocuprione, alpha-alpha-dipyridil and sodium EDTA) and by sodium azide, sodium arsenate and potassium cyanide. Functionally, methanesulfonate monooxygenase (MSAMO) mediates the primary degradation of methanesulfonic acid (MSA) to produce formaldehyd and inorganic sulfite by initial hydroxylation of the carbon atom prior to spontaneous cleavage of the unstable hydroxymethanesulfonic acid. MSAMO has a restricted substrate range that includes only the short-chain aliphatic sulfonates (methane- to butanesulfonate) and excludes all larger molecules, such as arylsulfonates and aromatic sulfonates. All MSAMO components are required for enzyme activity. The polypeptide is Methanesulfonate monooxygenase hydroxylase subunit beta (Methylosulfonomonas methylovora).